The primary structure comprises 400 residues: Na(+)/H(+) antiporter NhaA (400 aa).

The next 12 membrane-spanning stretches (helical) occupy residues 26 to 46 (AGGILLLFSAVVAMLLANSPL), 71 to 91 (LIHWINDGFMAVFFVLVGMEV), 107 to 127 (IFPAIAAIGGMVIPAVVYWFI), 137 to 157 (GWAIPMATDIAFALGIMALLS), 166 to 186 (IFLLALAIIDDLGAIVVIALF), 189 to 209 (HGLSVQALIFSAVAIIVLILL), 212 to 232 (FKVSALCAYMVVGAILWASVL), 233 to 253 (KSGVHATLAGVIIGFSIPLKG), 273 to 293 (FVILPLFAFANAGVSFAGIDV), 299 to 319 (PLLLAIASGLIIGKPVGIFGF), 340 to 360 (IFAVAVLCGIGFTMSMFLASL), and 373 to 393 (LSRLGILLGSTVSAILGYLFL).

This sequence belongs to the NhaA Na(+)/H(+) (TC 2.A.33) antiporter family.

It is found in the cell inner membrane. The enzyme catalyses Na(+)(in) + 2 H(+)(out) = Na(+)(out) + 2 H(+)(in). In terms of biological role, na(+)/H(+) antiporter that extrudes sodium in exchange for external protons. This Haemophilus influenzae (strain 86-028NP) protein is Na(+)/H(+) antiporter NhaA.